The following is a 388-amino-acid chain: Staphopain A (388 aa).

A signal peptide spans 1–25; sequence MKRNFPKLIALSLIFSLSVTPIANA. A propeptide spanning residues 26–214 is cleaved from the precursor; it reads ESNSNIKAKD…TSQFKSNNYT (189 aa). Active-site residues include C238, H334, and N355.

Belongs to the peptidase C47 family. In terms of assembly, in the cytoplasm, prematurely activated/folded ScpA forms a stable non-covalent complex with ScpB. In terms of processing, cleavage leads to the activation of ScpA probably by an auto-catalytic manner.

The protein localises to the secreted. The catalysed reaction is Broad endopeptidase action on proteins including elastin, but rather limited hydrolysis of small-molecule substrates. Assays are conveniently made with hemoglobin, casein or Z-Phe-Arg-NHMec as substrate.. Its activity is regulated as follows. Prematurely activated/folded staphopain A is inhibited by staphostatin A (ScpB), which is probably required to protect staphylococcal cytoplasmic proteins from degradation by ScpA. In terms of biological role, cysteine protease that plays an important role in the inhibition of host innate immune response. Cleaves host elastins found in connective tissues, pulmonary surfactant protein A in the lungs, and the chemokine receptor CXCR2 on leukocytes. Proteolytic cleavage of surfactant protein A impairs bacterial phagocytosis by neutrophils while CXCR2 degradation blocks neutrophil activation and chemotaxis. Additionally, promotes vascular leakage by activating the plasma kallikerin/kinin system, resulting in hypotension. In Staphylococcus aureus (strain Mu50 / ATCC 700699), this protein is Staphopain A (sspP).